The primary structure comprises 30 residues: Cyclotide psyleio E (30 aa).

Residues Ser-1 to Lys-30 constitute a cross-link (cyclopeptide (Ser-Lys)). Disulfide bonds link Cys-7-Cys-21, Cys-11-Cys-23, and Cys-16-Cys-28.

This is a cyclic peptide.

In terms of biological role, probably participates in a plant defense mechanism. The chain is Cyclotide psyleio E from Psychotria leiocarpa.